The following is a 474-amino-acid chain: Trigger factor (474 aa).

The PPIase FKBP-type domain maps to 174–261 (GDIAVVSFKG…LKDLKEKELP (88 aa)). Residues 435-474 (VKEKTTKTSKATKTSKTTKATKTASKTTKTTKTQNKKEKK) are disordered. Residues 442–467 (TSKATKTSKTTKATKTASKTTKTTKT) are compositionally biased toward low complexity.

It belongs to the FKBP-type PPIase family. Tig subfamily.

The protein resides in the cytoplasm. The catalysed reaction is [protein]-peptidylproline (omega=180) = [protein]-peptidylproline (omega=0). Functionally, involved in protein export. Acts as a chaperone by maintaining the newly synthesized protein in an open conformation. Functions as a peptidyl-prolyl cis-trans isomerase. In Prochlorococcus marinus (strain AS9601), this protein is Trigger factor.